Consider the following 302-residue polypeptide: Urease accessory protein UreD (302 aa).

Belongs to the UreD family. As to quaternary structure, ureD, UreF and UreG form a complex that acts as a GTP-hydrolysis-dependent molecular chaperone, activating the urease apoprotein by helping to assemble the nickel containing metallocenter of UreC. The UreE protein probably delivers the nickel.

The protein resides in the cytoplasm. Its function is as follows. Required for maturation of urease via the functional incorporation of the urease nickel metallocenter. The chain is Urease accessory protein UreD from Pseudoalteromonas translucida (strain TAC 125).